Consider the following 309-residue polypeptide: Glutaminase (309 aa).

7 residues coordinate substrate: S64, N114, E160, N167, Y191, Y243, and V261.

This sequence belongs to the glutaminase family. In terms of assembly, homotetramer.

It carries out the reaction L-glutamine + H2O = L-glutamate + NH4(+). This is Glutaminase from Methylobacterium sp. (strain 4-46).